The sequence spans 641 residues: Probable potassium transport system protein Kup (641 aa).

12 helical membrane-spanning segments follow: residues 29–49 (ISLAALGVVFGDIGTSPLYAI), 66–86 (ILGVLSLLFWALILIVSLKYL), 119–139 (WVLVSIGLFGASVLLGEAMIT), 156–176 (PAFADMVIPATVVILAGLFLF), 185–205 (GALFGPIILLWFFCLGTLGII), 231–251 (LHGFLVLGAVFLAVTGAEALY), 266–286 (WVLFVLPALLLNYFGQGAFLL), 298–318 (ALVPSWAMIPMVLLATVATVI), 356–376 (IYVPAANWALMAATIGLVLGF), 384–404 (AAYGASMTTTMLISTILFFFV), 415–435 (VLWALVSLFAVVDLSFFGASM), and 438–458 (LFHGAWFPLAVGLLMFTLMNT).

It belongs to the HAK/KUP transporter (TC 2.A.72) family.

It localises to the cell inner membrane. The catalysed reaction is K(+)(in) + H(+)(in) = K(+)(out) + H(+)(out). Transport of potassium into the cell. Likely operates as a K(+):H(+) symporter. The polypeptide is Probable potassium transport system protein Kup (Chlorobium phaeovibrioides (strain DSM 265 / 1930) (Prosthecochloris vibrioformis (strain DSM 265))).